The primary structure comprises 519 residues: Keratin, type II cytoskeletal 1b (519 aa).

Positions 1–166 (MSRQFSSQSA…DPEIQKIKTQ (166 aa)) are head. An omega-N-methylarginine mark is found at Arg81 and Arg95. A coil 1A region spans residues 167–202 (EREQIKTLNNKFASFIDKVRFLEQQNQVLQTKWELL). In terms of domain architecture, IF rod spans 167-480 (EREQIKTLNN…ELLEGEESRM (314 aa)). The segment at 203–221 (QQVNTSTRTSSLEPIFEEF) is linker 1. Positions 222-313 (INQLQRQVDV…YLFDTELSQI (92 aa)) are coil 1B. Residues 314–337 (QTHVSDTNVILSMDNNRSLDLDSI) form a linker 12 region. A coil 2 region spans residues 338 to 476 (INAVRTQYEL…ATYRELLEGE (139 aa)). Residues 477 to 519 (ESRMSGALQSQVSIWALPSNEGNDLGERLHDPQSQVPVPKLGC) are tail. The disordered stretch occupies residues 499-519 (NDLGERLHDPQSQVPVPKLGC).

Belongs to the intermediate filament family. Post-translationally, undergoes deimination of some arginine residues (citrullination).

This is Keratin, type II cytoskeletal 1b (Krt77) from Rattus norvegicus (Rat).